We begin with the raw amino-acid sequence, 711 residues long: Polyribonucleotide nucleotidyltransferase (711 aa).

2 residues coordinate Mg(2+): aspartate 486 and aspartate 492. The region spanning 553-612 (PRIHTIKINPDKIKDVIGKGGSVIRALTEETGTTIEIEDDGTVKIAATDGEKAKHAIRRI) is the KH domain. Residues 622–690 (GRIYNGKVTR…RQGRVRLSIK (69 aa)) enclose the S1 motif domain. Residues 690–711 (KEATEQSQPAAAPEAPAAEQGE) form a disordered region. Low complexity predominate over residues 694-711 (EQSQPAAAPEAPAAEQGE).

This sequence belongs to the polyribonucleotide nucleotidyltransferase family. As to quaternary structure, component of the RNA degradosome, which is a multiprotein complex involved in RNA processing and mRNA degradation. The cofactor is Mg(2+).

It localises to the cytoplasm. It carries out the reaction RNA(n+1) + phosphate = RNA(n) + a ribonucleoside 5'-diphosphate. In terms of biological role, involved in mRNA degradation. Catalyzes the phosphorolysis of single-stranded polyribonucleotides processively in the 3'- to 5'-direction. This chain is Polyribonucleotide nucleotidyltransferase, found in Citrobacter koseri (strain ATCC BAA-895 / CDC 4225-83 / SGSC4696).